Here is a 294-residue protein sequence, read N- to C-terminus: uncharacterized protein (294 aa).

Disordered regions lie at residues 1-148 (MFLR…LEKP) and 268-294 (DEAATDWESEGLEREGEEQRGDPGKGL). Phosphoserine occurs at positions 34 and 35. Residues 35–44 (SSENSGSDWD) are compositionally biased toward low complexity. Over residues 52 to 62 (DVGHPKTKDSG) the composition is skewed to basic and acidic residues. 2 positions are modified to phosphoserine: serine 71 and serine 90. Basic and acidic residues-rich tracts occupy residues 73 to 92 (PSKEEPQVEQLGSKRMDSLK) and 278 to 294 (GLEREGEEQRGDPGKGL).

This is an uncharacterized protein from Homo sapiens (Human).